The following is a 665-amino-acid chain: tRNA 5-methylaminomethyl-2-thiouridine biosynthesis bifunctional protein MnmC (665 aa).

Residues 1 to 243 (MSQTSLHHAR…KWAMLAGERV (243 aa)) are tRNA (mnm(5)s(2)U34)-methyltransferase. The interval 268 to 665 (IGGGIASAMT…RKLLKGKPLN (398 aa)) is FAD-dependent cmnm(5)s(2)U34 oxidoreductase.

It in the N-terminal section; belongs to the methyltransferase superfamily. tRNA (mnm(5)s(2)U34)-methyltransferase family. This sequence in the C-terminal section; belongs to the DAO family. It depends on FAD as a cofactor.

The protein resides in the cytoplasm. It catalyses the reaction 5-aminomethyl-2-thiouridine(34) in tRNA + S-adenosyl-L-methionine = 5-methylaminomethyl-2-thiouridine(34) in tRNA + S-adenosyl-L-homocysteine + H(+). Catalyzes the last two steps in the biosynthesis of 5-methylaminomethyl-2-thiouridine (mnm(5)s(2)U) at the wobble position (U34) in tRNA. Catalyzes the FAD-dependent demodification of cmnm(5)s(2)U34 to nm(5)s(2)U34, followed by the transfer of a methyl group from S-adenosyl-L-methionine to nm(5)s(2)U34, to form mnm(5)s(2)U34. The chain is tRNA 5-methylaminomethyl-2-thiouridine biosynthesis bifunctional protein MnmC from Aeromonas salmonicida (strain A449).